We begin with the raw amino-acid sequence, 764 residues long: Phenylalanine--tRNA ligase beta subunit (764 aa).

The tRNA-binding domain occupies 38-148 (CIAPKNVVVG…GELVLGKELH (111 aa)). Positions 375–455 (LKDCALTFQL…RFVGIDNLVS (81 aa)) constitute a B5 domain. 4 residues coordinate Mg(2+): Asp-433, Asp-439, Glu-442, and Glu-443. An FDX-ACB domain is found at 673-763 (SIYPSSVRDL…LEKEFNARLK (91 aa)).

Belongs to the phenylalanyl-tRNA synthetase beta subunit family. Type 1 subfamily. Tetramer of two alpha and two beta subunits. Requires Mg(2+) as cofactor.

It localises to the cytoplasm. It catalyses the reaction tRNA(Phe) + L-phenylalanine + ATP = L-phenylalanyl-tRNA(Phe) + AMP + diphosphate + H(+). The sequence is that of Phenylalanine--tRNA ligase beta subunit (pheT) from Helicobacter pylori (strain J99 / ATCC 700824) (Campylobacter pylori J99).